An 847-amino-acid chain; its full sequence is Leucine--tRNA ligase (847 aa).

The 'HIGH' region motif lies at 39–49; that stretch reads PYPSGALHMGH. A 'KMSKS' region motif is present at residues 613 to 617; that stretch reads KMSKS. K616 contacts ATP.

This sequence belongs to the class-I aminoacyl-tRNA synthetase family.

It localises to the cytoplasm. The catalysed reaction is tRNA(Leu) + L-leucine + ATP = L-leucyl-tRNA(Leu) + AMP + diphosphate. The sequence is that of Leucine--tRNA ligase from Gloeobacter violaceus (strain ATCC 29082 / PCC 7421).